The sequence spans 148 residues: Protein MGF 360-18R (148 aa).

Belongs to the asfivirus MGF 360 family.

Its function is as follows. Plays a role in virus cell tropism, and may be required for efficient virus replication in macrophages. The chain is Protein MGF 360-18R from African swine fever virus (strain Badajoz 1971 Vero-adapted) (Ba71V).